Consider the following 339-residue polypeptide: D-erythrose-4-phosphate dehydrogenase (339 aa).

11 to 12 (RI) lines the NAD(+) pocket. Substrate-binding positions include 158 to 160 (SCT), R204, 217 to 218 (TK), and R240. Catalysis depends on C159, which acts as the Nucleophile. N322 provides a ligand contact to NAD(+).

It belongs to the glyceraldehyde-3-phosphate dehydrogenase family. Epd subfamily. As to quaternary structure, homotetramer.

The protein localises to the cytoplasm. It carries out the reaction D-erythrose 4-phosphate + NAD(+) + H2O = 4-phospho-D-erythronate + NADH + 2 H(+). Its pathway is cofactor biosynthesis; pyridoxine 5'-phosphate biosynthesis; pyridoxine 5'-phosphate from D-erythrose 4-phosphate: step 1/5. Its function is as follows. Catalyzes the NAD-dependent conversion of D-erythrose 4-phosphate to 4-phosphoerythronate. This Aliivibrio salmonicida (strain LFI1238) (Vibrio salmonicida (strain LFI1238)) protein is D-erythrose-4-phosphate dehydrogenase.